We begin with the raw amino-acid sequence, 205 residues long: MLNLAALLWRRLLRKRWVLALVFGLSLVYFLSSTFKQEERAVRDRNLLQVQDREQPIPWKVQFNLGNSSRPSNQCRNSVQGKHLLTDELGYVCERKDLLANGCCDVSVPSTKQYCCDGCLANGCCEAYEYCVSCCLQPSKQLLLERFLNRAAVAFQNLFMAVEDHFELCLAKCRTSSQSVQHENTYRDPIAKYCYGESPPELFPA.

The Cytoplasmic portion of the chain corresponds to 1 to 16 (MLNLAALLWRRLLRKR). Residues 17–35 (WVLALVFGLSLVYFLSSTF) traverse the membrane as a helical segment. Over 36 to 205 (KQEERAVRDR…GESPPELFPA (170 aa)) the chain is Lumenal. A glycan (N-linked (GlcNAc...) asparagine) is linked at asparagine 67.

This sequence belongs to the SPRING family. Interacts with SCAP. Ubiquitously expressed with a slightly higher expression in the liver and kidney.

Its subcellular location is the golgi apparatus membrane. Positively regulates hepatic SREBP signaling pathway by modulating the proper localization of SCAP (SREBP cleavage-activating protein) to the endoplasmic reticulum, thereby controlling the level of functional SCAP. Plays a crucial role during embryogenesis. This chain is SREBP regulating gene protein (Spring1), found in Mus musculus (Mouse).